The chain runs to 350 residues: Mitogen-activated protein kinase HOG1 (350 aa).

One can recognise a Protein kinase domain in the interval 20–299 (YTDLQPVGMG…AAQALAHEYL (280 aa)). Residues 26–34 (VGMGAFGLV) and Lys-49 contribute to the ATP site. The Proton acceptor role is filled by Asp-141. Positions 171–173 (TGY) match the TXY motif.

The protein belongs to the protein kinase superfamily. Ser/Thr protein kinase family. MAP kinase subfamily. HOG1 sub-subfamily. The cofactor is Mg(2+).

The protein resides in the cytoplasm. It is found in the nucleus. The enzyme catalyses L-seryl-[protein] + ATP = O-phospho-L-seryl-[protein] + ADP + H(+). It carries out the reaction L-threonyl-[protein] + ATP = O-phospho-L-threonyl-[protein] + ADP + H(+). In terms of biological role, proline-directed serine/threonine-protein kinase involved in a signal transduction pathway that is activated by changes in the osmolarity of the extracellular environment. Controls osmotic regulation of transcription of target genes. Involved in environmental stress response. Via the downstream MSN2 transcription factor, may play roles in the regulation of growth, conidiation, trap development, fatty acid metabolism and secondary metabolites biosynthesis. The sequence is that of Mitogen-activated protein kinase HOG1 from Arthrobotrys oligospora (strain ATCC 24927 / CBS 115.81 / DSM 1491) (Nematode-trapping fungus).